We begin with the raw amino-acid sequence, 164 residues long: Protein SprT (164 aa).

Residues 12-157 (CFLQAESFFK…CRRCRQTLVF (146 aa)) form the SprT-like domain. His69 provides a ligand contact to Zn(2+). Residue Glu70 is part of the active site. Zn(2+) is bound at residue His73.

This sequence belongs to the SprT family. Zn(2+) is required as a cofactor.

It localises to the cytoplasm. This chain is Protein SprT, found in Pseudomonas fluorescens (strain SBW25).